The following is a 362-amino-acid chain: Aminomethyltransferase (362 aa).

This sequence belongs to the GcvT family. The glycine cleavage system is composed of four proteins: P, T, L and H.

It carries out the reaction N(6)-[(R)-S(8)-aminomethyldihydrolipoyl]-L-lysyl-[protein] + (6S)-5,6,7,8-tetrahydrofolate = N(6)-[(R)-dihydrolipoyl]-L-lysyl-[protein] + (6R)-5,10-methylene-5,6,7,8-tetrahydrofolate + NH4(+). In terms of biological role, the glycine cleavage system catalyzes the degradation of glycine. The polypeptide is Aminomethyltransferase (Listeria monocytogenes serotype 4a (strain HCC23)).